Here is a 473-residue protein sequence, read N- to C-terminus: Sucrose-6-phosphate hydrolase (473 aa).

Residues 44–47 (LLND), Gln63, 106–107 (YS), 167–168 (RD), and Glu224 each bind substrate. Asp47 is an active-site residue.

The protein belongs to the glycosyl hydrolase 32 family.

It is found in the cytoplasm. The enzyme catalyses Hydrolysis of terminal non-reducing beta-D-fructofuranoside residues in beta-D-fructofuranosides.. It participates in glycan biosynthesis; sucrose metabolism. This is Sucrose-6-phosphate hydrolase (scrB) from Lactococcus lactis subsp. lactis (Streptococcus lactis).